A 353-amino-acid polypeptide reads, in one-letter code: Melanin-concentrating hormone receptor 1 (353 aa).

Over 1-45 (MDLQASLLSTGPNASNISDGQDNFTLAGPPPRTRSVSYINIIMPS) the chain is Extracellular. 3 N-linked (GlcNAc...) asparagine glycosylation sites follow: Asn-13, Asn-16, and Asn-23. A helical membrane pass occupies residues 46–66 (VFGTICLLGIVGNSTVIFAVV). Residues 67-79 (KKSKLHWCSNVPD) lie on the Cytoplasmic side of the membrane. Residues 80-100 (IFIINLSVVDLLFLLGMPFMI) form a helical membrane-spanning segment. The Extracellular portion of the chain corresponds to 101–116 (HQLMGNGVWHFGETMC). Cys-116 and Cys-194 form a disulfide bridge. The chain crosses the membrane as a helical span at residues 117–139 (TLITAMDANSQFTSTYILTAMAI). Over 140-161 (DRYLATVHPISSTKFRKPSMAT) the chain is Cytoplasmic. A helical membrane pass occupies residues 162 to 182 (LVICLLWALSFISITPVWLYA). Over 183–204 (RLIPFPGGAVGCGIRLPNPDTD) the chain is Extracellular. A helical membrane pass occupies residues 205–225 (LYWFTLYQFFLAFALPFVVIT). Topologically, residues 226 to 256 (AAYVKILQRMTSSVAPASQRSIRLRTKRVTR) are cytoplasmic. The chain crosses the membrane as a helical span at residues 257–277 (TAIAICLVFFVCWAPYYVLQL). Residues 278-294 (TQLSISRPTLTFVYLYN) are Extracellular-facing. A helical transmembrane segment spans residues 295-315 (AAISLGYANSCLNPFVYIVLC). Residues 316–353 (ETFRKRLVLSVKPAAQGQLRTVSNAQTADEERTESKGT) are Cytoplasmic-facing.

The protein belongs to the G-protein coupled receptor 1 family. As to quaternary structure, interacts with NCDN. In terms of tissue distribution, expressed predominantly in the brain. Expression in brain is negatively regulated by leptin. Also found in the epithelium of the tongue and kidney.

It localises to the cell membrane. Functionally, receptor for melanin-concentrating hormone, coupled to both G proteins that inhibit adenylyl cyclase and G proteins that activate phosphoinositide hydrolysis. This chain is Melanin-concentrating hormone receptor 1, found in Mus musculus (Mouse).